Consider the following 196-residue polypeptide: Carnitine operon protein CaiE (196 aa).

Residues 173–196 (TQPLRQMEGNRPRLQGTTDVAPKR) are disordered.

Belongs to the transferase hexapeptide repeat family.

The protein operates within amine and polyamine metabolism; carnitine metabolism. Overproduction of CaiE stimulates the activity of CaiB and CaiD. This chain is Carnitine operon protein CaiE, found in Escherichia coli (strain SMS-3-5 / SECEC).